The sequence spans 252 residues: 2-succinyl-6-hydroxy-2,4-cyclohexadiene-1-carboxylate synthase (252 aa).

Belongs to the AB hydrolase superfamily. MenH family. Monomer.

It catalyses the reaction 5-enolpyruvoyl-6-hydroxy-2-succinyl-cyclohex-3-ene-1-carboxylate = (1R,6R)-6-hydroxy-2-succinyl-cyclohexa-2,4-diene-1-carboxylate + pyruvate. It functions in the pathway quinol/quinone metabolism; 1,4-dihydroxy-2-naphthoate biosynthesis; 1,4-dihydroxy-2-naphthoate from chorismate: step 3/7. The protein operates within quinol/quinone metabolism; menaquinone biosynthesis. Functionally, catalyzes a proton abstraction reaction that results in 2,5-elimination of pyruvate from 2-succinyl-5-enolpyruvyl-6-hydroxy-3-cyclohexene-1-carboxylate (SEPHCHC) and the formation of 2-succinyl-6-hydroxy-2,4-cyclohexadiene-1-carboxylate (SHCHC). The chain is 2-succinyl-6-hydroxy-2,4-cyclohexadiene-1-carboxylate synthase from Escherichia coli (strain K12 / MC4100 / BW2952).